Consider the following 238-residue polypeptide: ATP synthase subunit a (238 aa).

6 helical membrane passes run 18–38, 76–96, 114–134, 150–170, 188–208, and 211–231; these read TTNLISGLVSALIVFCVVFAL, FGLYAFTLFLFIFVSNQIGLF, PIVTLTLSLITMMLAHYSGVA, FKVWLPIGVFTEFIDFLTLGL, GIAFSGGIVNMIVAIPLALIW, and FSVFLGSIQAFVFVTLTSVYI.

Belongs to the ATPase A chain family. In terms of assembly, F-type ATPases have 2 components, CF(1) - the catalytic core - and CF(0) - the membrane proton channel. CF(1) has five subunits: alpha(3), beta(3), gamma(1), delta(1), epsilon(1). CF(0) has three main subunits: a(1), b(2) and c(9-12). The alpha and beta chains form an alternating ring which encloses part of the gamma chain. CF(1) is attached to CF(0) by a central stalk formed by the gamma and epsilon chains, while a peripheral stalk is formed by the delta and b chains.

It localises to the cell membrane. Key component of the proton channel; it plays a direct role in the translocation of protons across the membrane. This chain is ATP synthase subunit a, found in Pediococcus pentosaceus (strain ATCC 25745 / CCUG 21536 / LMG 10740 / 183-1w).